Consider the following 454-residue polypeptide: 3-phosphoshikimate 1-carboxyvinyltransferase (454 aa).

The disordered stretch occupies residues 1–31 (MSENHSEGASRPVISRRPAAGLRADHPVHVP). 3-phosphoshikimate contacts are provided by K34, S35, and R39. K34 lines the phosphoenolpyruvate pocket. Phosphoenolpyruvate contacts are provided by G107 and R135. 3-phosphoshikimate is bound by residues S180, Q182, D334, and K361. Phosphoenolpyruvate is bound at residue Q182. Residue D334 is the Proton acceptor of the active site. Phosphoenolpyruvate-binding residues include R365 and R409.

Belongs to the EPSP synthase family. As to quaternary structure, monomer.

It localises to the cytoplasm. It carries out the reaction 3-phosphoshikimate + phosphoenolpyruvate = 5-O-(1-carboxyvinyl)-3-phosphoshikimate + phosphate. It participates in metabolic intermediate biosynthesis; chorismate biosynthesis; chorismate from D-erythrose 4-phosphate and phosphoenolpyruvate: step 6/7. In terms of biological role, catalyzes the transfer of the enolpyruvyl moiety of phosphoenolpyruvate (PEP) to the 5-hydroxyl of shikimate-3-phosphate (S3P) to produce enolpyruvyl shikimate-3-phosphate and inorganic phosphate. The protein is 3-phosphoshikimate 1-carboxyvinyltransferase of Granulibacter bethesdensis (strain ATCC BAA-1260 / CGDNIH1).